We begin with the raw amino-acid sequence, 350 residues long: uncharacterized protein (350 aa).

The signal sequence occupies residues 1–27 (MKNKKRVLIASSLSCAILLLSAATTQA). The disordered stretch occupies residues 28 to 71 (NSAHKDSQDQNKKEHVDKSQQKEKRNVTNKDKNSTVPDDIGKNG). Residues 30-60 (AHKDSQDQNKKEHVDKSQQKEKRNVTNKDKN) show a composition bias toward basic and acidic residues.

The protein belongs to the aerolysin family.

This is an uncharacterized protein from Staphylococcus aureus (strain MSSA476).